A 359-amino-acid chain; its full sequence is N-acetyl-gamma-glutamyl-phosphate reductase (359 aa).

Residue Cys-162 is part of the active site.

Belongs to the NAGSA dehydrogenase family. Type 1 subfamily.

It is found in the cytoplasm. It carries out the reaction N-acetyl-L-glutamate 5-semialdehyde + phosphate + NADP(+) = N-acetyl-L-glutamyl 5-phosphate + NADPH + H(+). It participates in amino-acid biosynthesis; L-arginine biosynthesis; N(2)-acetyl-L-ornithine from L-glutamate: step 3/4. In terms of biological role, catalyzes the NADPH-dependent reduction of N-acetyl-5-glutamyl phosphate to yield N-acetyl-L-glutamate 5-semialdehyde. This is N-acetyl-gamma-glutamyl-phosphate reductase from Prochlorococcus marinus (strain MIT 9211).